Consider the following 148-residue polypeptide: UPF0260 protein KPN78578_22800 (148 aa).

It belongs to the UPF0260 family.

The chain is UPF0260 protein KPN78578_22800 from Klebsiella pneumoniae subsp. pneumoniae (strain ATCC 700721 / MGH 78578).